A 155-amino-acid polypeptide reads, in one-letter code: Ribosomal RNA large subunit methyltransferase H (155 aa).

S-adenosyl-L-methionine-binding positions include Leu73, Gly104, and 123-128; that span reads LSALTL.

The protein belongs to the RNA methyltransferase RlmH family. Homodimer.

Its subcellular location is the cytoplasm. The enzyme catalyses pseudouridine(1915) in 23S rRNA + S-adenosyl-L-methionine = N(3)-methylpseudouridine(1915) in 23S rRNA + S-adenosyl-L-homocysteine + H(+). Functionally, specifically methylates the pseudouridine at position 1915 (m3Psi1915) in 23S rRNA. This is Ribosomal RNA large subunit methyltransferase H from Saccharophagus degradans (strain 2-40 / ATCC 43961 / DSM 17024).